The sequence spans 415 residues: Tyrosine--tRNA ligase (415 aa).

The 'HIGH' region motif lies at 54–63; sequence PTGSNIHLGH. The 'KMSKS' region motif lies at 248-252; it reads KMSKS. Lysine 251 provides a ligand contact to ATP. In terms of domain architecture, S4 RNA-binding spans 351-414; it reads AKAFYLFSAV…LGKKTFRRLV (64 aa).

It belongs to the class-I aminoacyl-tRNA synthetase family. TyrS type 2 subfamily. Homodimer.

The protein resides in the cytoplasm. The enzyme catalyses tRNA(Tyr) + L-tyrosine + ATP = L-tyrosyl-tRNA(Tyr) + AMP + diphosphate + H(+). Catalyzes the attachment of tyrosine to tRNA(Tyr) in a two-step reaction: tyrosine is first activated by ATP to form Tyr-AMP and then transferred to the acceptor end of tRNA(Tyr). This chain is Tyrosine--tRNA ligase, found in Synechococcus sp. (strain CC9605).